The following is a 273-amino-acid chain: Imidazole glycerol phosphate synthase subunit HisF (273 aa).

Active-site residues include Asp11 and Asp134.

Belongs to the HisA/HisF family. As to quaternary structure, heterodimer of HisH and HisF.

Its subcellular location is the cytoplasm. It carries out the reaction 5-[(5-phospho-1-deoxy-D-ribulos-1-ylimino)methylamino]-1-(5-phospho-beta-D-ribosyl)imidazole-4-carboxamide + L-glutamine = D-erythro-1-(imidazol-4-yl)glycerol 3-phosphate + 5-amino-1-(5-phospho-beta-D-ribosyl)imidazole-4-carboxamide + L-glutamate + H(+). It functions in the pathway amino-acid biosynthesis; L-histidine biosynthesis; L-histidine from 5-phospho-alpha-D-ribose 1-diphosphate: step 5/9. In terms of biological role, IGPS catalyzes the conversion of PRFAR and glutamine to IGP, AICAR and glutamate. The HisF subunit catalyzes the cyclization activity that produces IGP and AICAR from PRFAR using the ammonia provided by the HisH subunit. The polypeptide is Imidazole glycerol phosphate synthase subunit HisF (Methanosarcina mazei (strain ATCC BAA-159 / DSM 3647 / Goe1 / Go1 / JCM 11833 / OCM 88) (Methanosarcina frisia)).